A 219-amino-acid chain; its full sequence is Agamous-like MADS-box protein AGL19 (219 aa).

Positions Met1–Ser61 constitute an MADS-box domain. The disordered stretch occupies residues Gly77 to Leu96. Residues Ser86 to Ala176 enclose the K-box domain.

As to quaternary structure, interacts with SOC1 and AGL21. In terms of tissue distribution, mostly expressed in the outer layers of the root meristem (lateral root cap and epidermis) and in the central cylinder cells of mature roots. Also present in rosette leaves and seedlings and, to a lesser extent, in cauline leaves and flowers. Enriched in apices including the shoot apical meristem and developing leaf primordia.

It localises to the nucleus. Its function is as follows. Probable transcription factor that promotes flowering, especially in response to vernalization by short periods of cold, in an FLC-inpedendent manner. This chain is Agamous-like MADS-box protein AGL19 (AGL19), found in Arabidopsis thaliana (Mouse-ear cress).